The primary structure comprises 307 residues: UDP-N-acetylenolpyruvoylglucosamine reductase (307 aa).

The region spanning 34–199 (RVGGPAQVLF…TAVRFRGTPS (166 aa)) is the FAD-binding PCMH-type domain. Residue R179 is part of the active site. The active-site Proton donor is S228. Residue E298 is part of the active site.

It belongs to the MurB family. FAD is required as a cofactor.

It is found in the cytoplasm. The catalysed reaction is UDP-N-acetyl-alpha-D-muramate + NADP(+) = UDP-N-acetyl-3-O-(1-carboxyvinyl)-alpha-D-glucosamine + NADPH + H(+). Its pathway is cell wall biogenesis; peptidoglycan biosynthesis. Its function is as follows. Cell wall formation. This Bradyrhizobium sp. (strain ORS 278) protein is UDP-N-acetylenolpyruvoylglucosamine reductase.